Here is a 252-residue protein sequence, read N- to C-terminus: Imidazole glycerol phosphate synthase subunit HisF (252 aa).

Active-site residues include D11 and D130.

It belongs to the HisA/HisF family. In terms of assembly, heterodimer of HisH and HisF.

The protein resides in the cytoplasm. It catalyses the reaction 5-[(5-phospho-1-deoxy-D-ribulos-1-ylimino)methylamino]-1-(5-phospho-beta-D-ribosyl)imidazole-4-carboxamide + L-glutamine = D-erythro-1-(imidazol-4-yl)glycerol 3-phosphate + 5-amino-1-(5-phospho-beta-D-ribosyl)imidazole-4-carboxamide + L-glutamate + H(+). The protein operates within amino-acid biosynthesis; L-histidine biosynthesis; L-histidine from 5-phospho-alpha-D-ribose 1-diphosphate: step 5/9. Functionally, IGPS catalyzes the conversion of PRFAR and glutamine to IGP, AICAR and glutamate. The HisF subunit catalyzes the cyclization activity that produces IGP and AICAR from PRFAR using the ammonia provided by the HisH subunit. In Syntrophomonas wolfei subsp. wolfei (strain DSM 2245B / Goettingen), this protein is Imidazole glycerol phosphate synthase subunit HisF.